A 282-amino-acid polypeptide reads, in one-letter code: Small ribosomal subunit protein uS2 (282 aa).

Residues 245-265 (AEEAVEELPLPTGEAQDEASS) are disordered.

It belongs to the universal ribosomal protein uS2 family.

The chain is Small ribosomal subunit protein uS2 from Chlamydia trachomatis serovar A (strain ATCC VR-571B / DSM 19440 / HAR-13).